The chain runs to 208 residues: Redox-sensing transcriptional repressor Rex (208 aa).

The segment at residues Ser-15–Phe-54 is a DNA-binding region (H-T-H motif). NAD(+) is bound at residue Gly-89 to Gly-94.

The protein belongs to the transcriptional regulatory Rex family. As to quaternary structure, homodimer.

The protein localises to the cytoplasm. Its function is as follows. Modulates transcription in response to changes in cellular NADH/NAD(+) redox state. The polypeptide is Redox-sensing transcriptional repressor Rex (Thermotoga petrophila (strain ATCC BAA-488 / DSM 13995 / JCM 10881 / RKU-1)).